A 398-amino-acid polypeptide reads, in one-letter code: 4-hydroxy-3-methylbut-2-enyl diphosphate reductase (398 aa).

Cys-66 is a binding site for [4Fe-4S] cluster. (2E)-4-hydroxy-3-methylbut-2-enyl diphosphate is bound at residue His-96. His-96 provides a ligand contact to dimethylallyl diphosphate. His-96 contributes to the isopentenyl diphosphate binding site. Cys-157 lines the [4Fe-4S] cluster pocket. His-185 is a binding site for (2E)-4-hydroxy-3-methylbut-2-enyl diphosphate. His-185 contacts dimethylallyl diphosphate. His-185 is an isopentenyl diphosphate binding site. Catalysis depends on Glu-187, which acts as the Proton donor. Thr-250 provides a ligand contact to (2E)-4-hydroxy-3-methylbut-2-enyl diphosphate. Residue Cys-288 coordinates [4Fe-4S] cluster. Positions 317, 318, 319, and 379 each coordinate (2E)-4-hydroxy-3-methylbut-2-enyl diphosphate. The dimethylallyl diphosphate site is built by Ser-317, Ser-318, Asn-319, and Ser-379. Isopentenyl diphosphate contacts are provided by Ser-317, Ser-318, Asn-319, and Ser-379.

It belongs to the IspH family. [4Fe-4S] cluster is required as a cofactor.

The enzyme catalyses isopentenyl diphosphate + 2 oxidized [2Fe-2S]-[ferredoxin] + H2O = (2E)-4-hydroxy-3-methylbut-2-enyl diphosphate + 2 reduced [2Fe-2S]-[ferredoxin] + 2 H(+). It catalyses the reaction dimethylallyl diphosphate + 2 oxidized [2Fe-2S]-[ferredoxin] + H2O = (2E)-4-hydroxy-3-methylbut-2-enyl diphosphate + 2 reduced [2Fe-2S]-[ferredoxin] + 2 H(+). It participates in isoprenoid biosynthesis; dimethylallyl diphosphate biosynthesis; dimethylallyl diphosphate from (2E)-4-hydroxy-3-methylbutenyl diphosphate: step 1/1. The protein operates within isoprenoid biosynthesis; isopentenyl diphosphate biosynthesis via DXP pathway; isopentenyl diphosphate from 1-deoxy-D-xylulose 5-phosphate: step 6/6. In terms of biological role, catalyzes the conversion of 1-hydroxy-2-methyl-2-(E)-butenyl 4-diphosphate (HMBPP) into a mixture of isopentenyl diphosphate (IPP) and dimethylallyl diphosphate (DMAPP). Acts in the terminal step of the DOXP/MEP pathway for isoprenoid precursor biosynthesis. This is 4-hydroxy-3-methylbut-2-enyl diphosphate reductase from Prochlorococcus marinus (strain MIT 9313).